The following is a 159-amino-acid chain: Ribosomal RNA large subunit methyltransferase H (159 aa).

Gly108 lines the S-adenosyl-L-methionine pocket.

This sequence belongs to the RNA methyltransferase RlmH family. In terms of assembly, homodimer.

The protein resides in the cytoplasm. It carries out the reaction pseudouridine(1915) in 23S rRNA + S-adenosyl-L-methionine = N(3)-methylpseudouridine(1915) in 23S rRNA + S-adenosyl-L-homocysteine + H(+). Its function is as follows. Specifically methylates the pseudouridine at position 1915 (m3Psi1915) in 23S rRNA. The chain is Ribosomal RNA large subunit methyltransferase H from Lactobacillus gasseri (strain ATCC 33323 / DSM 20243 / BCRC 14619 / CIP 102991 / JCM 1131 / KCTC 3163 / NCIMB 11718 / NCTC 13722 / AM63).